The sequence spans 166 residues: Interferon gamma (166 aa).

The first 23 residues, 1–23, serve as a signal peptide directing secretion; sequence MKYTSSFLALLLCVLLGFSGSYG. Glutamine 24 carries the pyrrolidone carboxylic acid modification. 2 N-linked (GlcNAc...) asparagine glycosylation sites follow: asparagine 39 and asparagine 106.

It belongs to the type II (or gamma) interferon family. As to quaternary structure, homodimer. Interacts with IFNGR1 (via extracellular domain); this interaction promotes IFNGR1 dimerization. Released primarily from activated T lymphocytes.

The protein resides in the secreted. Type II interferon produced by immune cells such as T-cells and NK cells that plays crucial roles in antimicrobial, antiviral, and antitumor responses by activating effector immune cells and enhancing antigen presentation. Primarily signals through the JAK-STAT pathway after interaction with its receptor IFNGR1 to affect gene regulation. Upon IFNG binding, IFNGR1 intracellular domain opens out to allow association of downstream signaling components JAK2, JAK1 and STAT1, leading to STAT1 activation, nuclear translocation and transcription of IFNG-regulated genes. Many of the induced genes are transcription factors such as IRF1 that are able to further drive regulation of a next wave of transcription. Plays a role in class I antigen presentation pathway by inducing a replacement of catalytic proteasome subunits with immunoproteasome subunits. In turn, increases the quantity, quality, and repertoire of peptides for class I MHC loading. Increases the efficiency of peptide generation also by inducing the expression of activator PA28 that associates with the proteasome and alters its proteolytic cleavage preference. Up-regulates as well MHC II complexes on the cell surface by promoting expression of several key molecules such as cathepsins B/CTSB, H/CTSH, and L/CTSL. Participates in the regulation of hematopoietic stem cells during development and under homeostatic conditions by affecting their development, quiescence, and differentiation. In Ovis aries (Sheep), this protein is Interferon gamma (IFNG).